The primary structure comprises 591 residues: Thiol:disulfide interchange protein DsbD 1 (591 aa).

Residues 1 to 18 (MRRLLTLILLLVALPAGA) form the signal peptide. The Periplasmic segment spans residues 19–175 (GLFDSRPGAS…GPLEHKGKRS (157 aa)). 2 disulfide bridges follow: cysteine 134-cysteine 140 and cysteine 191-cysteine 313. The helical transmembrane segment at 176–196 (LLFFFLAGLTLTFTPCVLPML) threads the bilayer. Over 197–213 (PILSGVVLRGRPGGGRG) the chain is Cytoplasmic. Residues 214–234 (FVLSLAYVLPMALCFALLGAL) form a helical membrane-spanning segment. The Periplasmic portion of the chain corresponds to 235–251 (MGMFGASLNLQAQLQSP). A helical membrane pass occupies residues 252–272 (WVLVPFAAFFALFAVAMFGFF). Residues 273–295 (ELRLPGFIREPLDRLAGDARGGS) are Cytoplasmic-facing. A helical membrane pass occupies residues 296-316 (ILGAATLGVLSSLLVSPCVSA). At 317 to 338 (PLAASLLYISASGDAWGGGLQL) the chain is on the periplasmic side. A helical transmembrane segment spans residues 339 to 359 (FALGLGMGTPLVVFGAGGGAL). Topologically, residues 360 to 365 (LPKSGA) are cytoplasmic. The helical transmembrane segment at 366–386 (WMNGVRNAFGVLLLAVAVWLL) threads the bilayer. Over 387-392 (ERVVSG) the chain is Periplasmic. A helical transmembrane segment spans residues 393 to 413 (PVALMLWGMLAGGAGLALGAL). Over 414–423 (EFTPKSAARR) the chain is Cytoplasmic. Residues 424-444 (LLQLLGLMFLTYAVAAWIGAL) form a helical membrane-spanning segment. Over 445–591 (QGESDPIHPL…ERLRRAATRQ (147 aa)) the chain is Periplasmic. Residues 452 to 589 (HPLGRSVPSI…LAERLRRAAT (138 aa)) form the Thioredoxin domain. A disulfide bridge connects residues cysteine 504 and cysteine 507.

The protein belongs to the thioredoxin family. DsbD subfamily.

It is found in the cell inner membrane. It catalyses the reaction [protein]-dithiol + NAD(+) = [protein]-disulfide + NADH + H(+). It carries out the reaction [protein]-dithiol + NADP(+) = [protein]-disulfide + NADPH + H(+). Its function is as follows. Required to facilitate the formation of correct disulfide bonds in some periplasmic proteins and for the assembly of the periplasmic c-type cytochromes. Acts by transferring electrons from cytoplasmic thioredoxin to the periplasm. This transfer involves a cascade of disulfide bond formation and reduction steps. The chain is Thiol:disulfide interchange protein DsbD 1 from Pseudomonas aeruginosa (strain ATCC 15692 / DSM 22644 / CIP 104116 / JCM 14847 / LMG 12228 / 1C / PRS 101 / PAO1).